The primary structure comprises 284 residues: Homeobox protein six1b (284 aa).

A DNA-binding region (homeobox) is located at residues 124 to 183 (GEETSYCFKEKSRGVLREWYTHNPYPSPREKRELAEATGLTTTQVSNWFKNRRQRDRAAE). The disordered stretch occupies residues 167-238 (QVSNWFKNRR…NSVLLLQGNM (72 aa)). Positions 179–190 (DRAAEAKERENS) are enriched in basic and acidic residues. Polar residues-rich tracts occupy residues 191–204 (ENNN…NQLS) and 226–238 (PDQN…QGNM).

The protein belongs to the SIX/Sine oculis homeobox family. Interacts with eya1.

Its subcellular location is the nucleus. The protein localises to the cytoplasm. Its function is as follows. Transcription factor that is involved in the regulation of cell proliferation, apoptosis and embryonic development. Depending on context, functions as a transcriptional repressor or activator. Transcriptional activation is enhanced by eya1 (in vitro). Plays an important role in the development of the inner ear, where it promotes hair cell proliferation and inhibits proliferation of neural progenitor cells. Required for normal myogenesis. Plays a role in the development of fast muscle fibers throughout the body, as well as the development of craniofacial muscles. Required for normal expression of myod1 and myog during myogenesis. This chain is Homeobox protein six1b (six1b), found in Danio rerio (Zebrafish).